Consider the following 387-residue polypeptide: Sulfopyruvate decarboxylase (387 aa).

Belongs to the TPP enzyme family. The cofactor is thiamine diphosphate.

It catalyses the reaction 3-sulfopyruvate + H(+) = sulfoacetaldehyde + CO2. It participates in cofactor biosynthesis; coenzyme M biosynthesis. Its function is as follows. Involved in the biosynthesis of the coenzyme M (2-mercaptoethanesulfonic acid). Catalyzes the decarboxylation of sulfopyruvate to sulfoacetaldehyde. Is not able to decarboxylate the analogous compounds 2-oxoglutarate or 2-oxosuberate. The chain is Sulfopyruvate decarboxylase from Methanosarcina acetivorans (strain ATCC 35395 / DSM 2834 / JCM 12185 / C2A).